We begin with the raw amino-acid sequence, 952 residues long: Glycine dehydrogenase (decarboxylating) (952 aa).

Position 703 is an N6-(pyridoxal phosphate)lysine (Lys703).

It belongs to the GcvP family. In terms of assembly, the glycine cleavage system is composed of four proteins: P, T, L and H. Requires pyridoxal 5'-phosphate as cofactor.

The enzyme catalyses N(6)-[(R)-lipoyl]-L-lysyl-[glycine-cleavage complex H protein] + glycine + H(+) = N(6)-[(R)-S(8)-aminomethyldihydrolipoyl]-L-lysyl-[glycine-cleavage complex H protein] + CO2. The glycine cleavage system catalyzes the degradation of glycine. The P protein binds the alpha-amino group of glycine through its pyridoxal phosphate cofactor; CO(2) is released and the remaining methylamine moiety is then transferred to the lipoamide cofactor of the H protein. This chain is Glycine dehydrogenase (decarboxylating), found in Mycobacterium leprae (strain Br4923).